A 246-amino-acid polypeptide reads, in one-letter code: Pyridoxine 5'-phosphate synthase (246 aa).

Asparagine 9 is a binding site for 3-amino-2-oxopropyl phosphate. 11–12 (DH) serves as a coordination point for 1-deoxy-D-xylulose 5-phosphate. A 3-amino-2-oxopropyl phosphate-binding site is contributed by arginine 20. Histidine 45 (proton acceptor) is an active-site residue. Positions 47 and 52 each coordinate 1-deoxy-D-xylulose 5-phosphate. The active-site Proton acceptor is the glutamate 72. Threonine 102 lines the 1-deoxy-D-xylulose 5-phosphate pocket. Histidine 193 serves as the catalytic Proton donor. Residues glycine 194 and 215-216 (GH) contribute to the 3-amino-2-oxopropyl phosphate site.

Belongs to the PNP synthase family. In terms of assembly, homooctamer; tetramer of dimers.

It is found in the cytoplasm. It catalyses the reaction 3-amino-2-oxopropyl phosphate + 1-deoxy-D-xylulose 5-phosphate = pyridoxine 5'-phosphate + phosphate + 2 H2O + H(+). The protein operates within cofactor biosynthesis; pyridoxine 5'-phosphate biosynthesis; pyridoxine 5'-phosphate from D-erythrose 4-phosphate: step 5/5. Functionally, catalyzes the complicated ring closure reaction between the two acyclic compounds 1-deoxy-D-xylulose-5-phosphate (DXP) and 3-amino-2-oxopropyl phosphate (1-amino-acetone-3-phosphate or AAP) to form pyridoxine 5'-phosphate (PNP) and inorganic phosphate. The protein is Pyridoxine 5'-phosphate synthase of Colwellia psychrerythraea (strain 34H / ATCC BAA-681) (Vibrio psychroerythus).